The primary structure comprises 736 residues: ATP-dependent zinc metalloprotease FtsH (736 aa).

Disordered regions lie at residues 1–39 (MDSN…GQQR) and 57–83 (QQTQ…RKKM). Residues 1-87 (MDSNVDSQRV…ADRKKMPPGK (87 aa)) are Cytoplasmic-facing. The span at 57–73 (QQTQNRTGFASADTKQG) shows a compositional bias: polar residues. Residues 88–108 (AWLWFVLILIVNFLMVRLLIP) traverse the membrane as a helical segment. The Periplasmic portion of the chain corresponds to 109–205 (DAEQPVMVPY…KPIHEERSPW (97 aa)). The helical transmembrane segment at 206-226 (ATIVYSFGPGLLFIAFYIWLF) threads the bilayer. Over 227–736 (RRMAQQGGLG…VSLPGVAGPS (510 aa)) the chain is Cytoplasmic. 301-308 (GAPGTGKT) is a binding site for ATP. Residue histidine 522 participates in Zn(2+) binding. Glutamate 523 is an active-site residue. Zn(2+)-binding residues include histidine 526 and aspartate 598. Residues 706–736 (PALDAGKLPVPDGGDKNAEPSVSLPGVAGPS) form a disordered region.

This sequence in the central section; belongs to the AAA ATPase family. It in the C-terminal section; belongs to the peptidase M41 family. As to quaternary structure, homohexamer. The cofactor is Zn(2+).

The protein resides in the cell inner membrane. In terms of biological role, acts as a processive, ATP-dependent zinc metallopeptidase for both cytoplasmic and membrane proteins. Plays a role in the quality control of integral membrane proteins. The sequence is that of ATP-dependent zinc metalloprotease FtsH from Syntrophus aciditrophicus (strain SB).